Consider the following 39-residue polypeptide: Photosystem II reaction center protein L (39 aa).

A helical transmembrane segment spans residues 18–38 (SLYLGVLSVLVLGILFSSYFF).

It belongs to the PsbL family. PSII is composed of 1 copy each of membrane proteins PsbA, PsbB, PsbC, PsbD, PsbE, PsbF, PsbH, PsbI, PsbJ, PsbK, PsbL, PsbM, PsbT, PsbX, PsbY, Psb30/Ycf12, peripheral proteins PsbO, CyanoQ (PsbQ), PsbU, PsbV and a large number of cofactors. It forms dimeric complexes.

The protein localises to the cellular thylakoid membrane. In terms of biological role, one of the components of the core complex of photosystem II (PSII). PSII is a light-driven water:plastoquinone oxidoreductase that uses light energy to abstract electrons from H(2)O, generating O(2) and a proton gradient subsequently used for ATP formation. It consists of a core antenna complex that captures photons, and an electron transfer chain that converts photonic excitation into a charge separation. This subunit is found at the monomer-monomer interface and is required for correct PSII assembly and/or dimerization. In Prochlorococcus marinus (strain MIT 9515), this protein is Photosystem II reaction center protein L.